The following is a 448-amino-acid chain: MRVSPAATLSVSLTTPLPITLTKARFSGEPLRLKQYVLSNQICSRPKHLLSEFKPTRRWTFSCKCRNRGRNGYAKFDDEGEDFIVVNFYRFVSIGDPEAEIEKHLSFLKDLNIRGRIYLNEQGINAQYSGPSKDALAYVEWLKGDDRFSDLLVQMSPAMNRHAFPKLKLQNKPSLVQYEGGISHLPLLDPPMRAKPLEPSEWKRKLKDLTDDDEASPSNSGKSYILLDVRNGYEWDVGHFRGAHRPEVDCFRNTSFGLSDEKEAPSDPLINVDKEKTDILMYCTGGIRCDVYSTVLRQRGFKNLYTLKGGVSHYLKEEGTAEWVGNLFVFDSRLSLPPAAYNDNVVDKAVGDNVVDEAGRTPQTPVDTSFARCYLCNSQVQELRHRNCANLDCNRLFLCCAECVVDLKGCCCSDCISAPRLRPVLHGVKRYEKWHVYRDSEEQNAPLV.

The N-terminal 23 residues, 1–23 (MRVSPAATLSVSLTTPLPITLTK), are a transit peptide targeting the chloroplast. Residues 220–323 (SGKSYILLDV…YLKEEGTAEW (104 aa)) enclose the Rhodanese domain. C283 (cysteine persulfide intermediate) is an active-site residue.

The protein resides in the plastid. It is found in the chloroplast. This is Rhodanese-like domain-containing protein 8, chloroplastic (STR8) from Arabidopsis thaliana (Mouse-ear cress).